Here is a 305-residue protein sequence, read N- to C-terminus: tRNA pseudouridine synthase B (305 aa).

D48 functions as the Nucleophile in the catalytic mechanism.

This sequence belongs to the pseudouridine synthase TruB family. Type 1 subfamily.

It catalyses the reaction uridine(55) in tRNA = pseudouridine(55) in tRNA. Functionally, responsible for synthesis of pseudouridine from uracil-55 in the psi GC loop of transfer RNAs. The chain is tRNA pseudouridine synthase B from Actinobacillus pleuropneumoniae serotype 5b (strain L20).